The following is a 270-amino-acid chain: Large ribosomal subunit protein uL30 (270 aa).

Residue M1 is modified to N-acetylmethionine. Tandem repeats lie at residues 7 to 18, 19 to 29, 30 to 40, 41 to 52, 53 to 64, and 65 to 76. Residues 7–76 are 6 X 12 AA tandem repeats; sequence KKKKVATVPG…ARRKLIYEKA (70 aa). Residue T39 is modified to Phosphothreonine. Position 146 is an N6-acetyllysine (K146). K149 is modified (N6-succinyllysine). A Phosphotyrosine modification is found at Y161.

It belongs to the universal ribosomal protein uL30 family. As to quaternary structure, component of the large ribosomal subunit. Homodimer. Interacts with DHX33.

It localises to the cytoplasm. Its function is as follows. Component of the large ribosomal subunit. The ribosome is a large ribonucleoprotein complex responsible for the synthesis of proteins in the cell. Binds to G-rich structures in 28S rRNA and in mRNAs. Plays a regulatory role in the translation apparatus; inhibits cell-free translation of mRNAs. The chain is Large ribosomal subunit protein uL30 (Rpl7) from Mus musculus (Mouse).